Reading from the N-terminus, the 423-residue chain is Cell adhesion molecule CEACAM16 (423 aa).

Positions 1–22 (MKMPLTWGSWFLLSAWILNAGA) are cleaved as a signal peptide. N-linked (GlcNAc...) asparagine glycosylation occurs at N38. Residues 77–96 (ETPGPAHTGREAVRPDGSLD) are disordered. A compositionally biased stretch (basic and acidic residues) spans 84–95 (TGREAVRPDGSL). Ig-like C2-type domains are found at residues 134 to 219 (PPTV…LNLT) and 224 to 310 (PERV…ASVV). C155 and C202 are disulfide-bonded. A glycan (N-linked (GlcNAc...) asparagine) is linked at N217. C253 and C294 are disulfide-bonded.

Belongs to the immunoglobulin superfamily. CEA family. Homooligomer; can for homodimers and homotetramers. Interacts with TECTA and TECTB.

Its subcellular location is the secreted. Required for proper hearing, plays a role in maintaining the integrity of the tectorial membrane. The polypeptide is Cell adhesion molecule CEACAM16 (Rattus norvegicus (Rat)).